Here is a 448-residue protein sequence, read N- to C-terminus: Probable glycine dehydrogenase (decarboxylating) subunit 1 (448 aa).

It belongs to the GcvP family. N-terminal subunit subfamily. As to quaternary structure, the glycine cleavage system is composed of four proteins: P, T, L and H. In this organism, the P 'protein' is a heterodimer of two subunits.

The catalysed reaction is N(6)-[(R)-lipoyl]-L-lysyl-[glycine-cleavage complex H protein] + glycine + H(+) = N(6)-[(R)-S(8)-aminomethyldihydrolipoyl]-L-lysyl-[glycine-cleavage complex H protein] + CO2. Its function is as follows. The glycine cleavage system catalyzes the degradation of glycine. The P protein binds the alpha-amino group of glycine through its pyridoxal phosphate cofactor; CO(2) is released and the remaining methylamine moiety is then transferred to the lipoamide cofactor of the H protein. The sequence is that of Probable glycine dehydrogenase (decarboxylating) subunit 1 from Listeria monocytogenes serovar 1/2a (strain ATCC BAA-679 / EGD-e).